A 364-amino-acid chain; its full sequence is Chorismate synthase (364 aa).

The NADP(+) site is built by Arg48 and Arg54. Residues 125–127, 238–239, Gly278, 293–297, and Arg319 contribute to the FMN site; these read RSS, NA, and KPTSS.

This sequence belongs to the chorismate synthase family. Homotetramer. FMNH2 is required as a cofactor.

The enzyme catalyses 5-O-(1-carboxyvinyl)-3-phosphoshikimate = chorismate + phosphate. It functions in the pathway metabolic intermediate biosynthesis; chorismate biosynthesis; chorismate from D-erythrose 4-phosphate and phosphoenolpyruvate: step 7/7. In terms of biological role, catalyzes the anti-1,4-elimination of the C-3 phosphate and the C-6 proR hydrogen from 5-enolpyruvylshikimate-3-phosphate (EPSP) to yield chorismate, which is the branch point compound that serves as the starting substrate for the three terminal pathways of aromatic amino acid biosynthesis. This reaction introduces a second double bond into the aromatic ring system. This chain is Chorismate synthase, found in Shewanella loihica (strain ATCC BAA-1088 / PV-4).